Here is a 425-residue protein sequence, read N- to C-terminus: Dihydroorotase (425 aa).

Zn(2+) is bound by residues His-60 and His-62. Residues 62 to 64 (HLR) and Asn-94 each bind substrate. Residues Asp-152, His-179, and His-232 each contribute to the Zn(2+) site. Substrate is bound at residue Asn-278. Position 305 (Asp-305) interacts with Zn(2+). Asp-305 is an active-site residue. Residue His-309 participates in substrate binding.

Belongs to the metallo-dependent hydrolases superfamily. DHOase family. Class I DHOase subfamily. Requires Zn(2+) as cofactor.

The enzyme catalyses (S)-dihydroorotate + H2O = N-carbamoyl-L-aspartate + H(+). It functions in the pathway pyrimidine metabolism; UMP biosynthesis via de novo pathway; (S)-dihydroorotate from bicarbonate: step 3/3. Its function is as follows. Catalyzes the reversible cyclization of carbamoyl aspartate to dihydroorotate. This Syntrophotalea carbinolica (strain DSM 2380 / NBRC 103641 / GraBd1) (Pelobacter carbinolicus) protein is Dihydroorotase.